The chain runs to 267 residues: Palmitoyltransferase ZDHHC12 (267 aa).

Topologically, residues 1–9 (MALWPPLNS) are cytoplasmic. The helical transmembrane segment at 10 to 30 (GMLVRTGHTVLTWGITLVLFL) threads the bilayer. Over 31 to 43 (HDTELRQWEEQGE) the chain is Lumenal. Residues 44 to 64 (LLLPLTFLLLVLSSLLLYLAV) form a helical membrane-spanning segment. The Cytoplasmic portion of the chain corresponds to 65-140 (SLMDPGYVTT…ENCVGERNHP (76 aa)). The DHHC domain maps to 97–147 (RRCRHCLVLQPLRARHCRDCRRCVRRYDHHCPWMENCVGERNHPLFVAYLA). Cysteine 127 serves as the catalytic S-palmitoyl cysteine intermediate. Residues 141 to 161 (LFVAYLALQLVVLLWGLCLAW) form a helical membrane-spanning segment. Residues 162-178 (SGLQFFQPWGLWLRSTG) are Lumenal-facing. A helical membrane pass occupies residues 179–199 (LLFTTFLLLSFFALVVALLLA). The Cytoplasmic segment spans residues 200–267 (SHLYLVARNT…EEEEGSSQVV (68 aa)).

Belongs to the DHHC palmitoyltransferase family.

It is found in the golgi apparatus membrane. It localises to the endoplasmic reticulum membrane. The catalysed reaction is L-cysteinyl-[protein] + hexadecanoyl-CoA = S-hexadecanoyl-L-cysteinyl-[protein] + CoA. Functionally, palmitoyltransferase that catalyzes the addition of palmitate onto various protein substrates. Has a palmitoyltransferase activity toward gephyrin/GPHN, regulating its clustering at synapses and its function in gamma-aminobutyric acid receptor clustering. Thereby, indirectly regulates GABAergic synaptic transmission. Negatively regulates NLRP3-driven inflammation. Catalyzes NLRP3 palmitoylation, leading to its degradation via the chaperone-mediated autophagy (CMA) process. In Mus musculus (Mouse), this protein is Palmitoyltransferase ZDHHC12.